The primary structure comprises 358 residues: Fructose-bisphosphate aldolase 5, cytosolic (358 aa).

Ser2 is modified (N-acetylserine). Substrate is bound at residue Arg39. Cys68 is modified (S-glutathionyl cysteine; transient). Cys173 carries the S-glutathionyl cysteine; transient; alternate modification. Cys173 carries the post-translational modification S-nitrosocysteine; transient; alternate. The active-site Proton acceptor is Glu183. The active-site Schiff-base intermediate with dihydroxyacetone-P is Lys225. Substrate contacts are provided by residues Ser266–Gly268 and Arg298. A Phosphoserine modification is found at Ser350.

It belongs to the class I fructose-bisphosphate aldolase family. Homotetramer. Interacts with TRX3. In terms of processing, S-glutathionylated at Cys-68 and Cys-173. S-nitrosylated at Cys-173. Expressed in rosette leaves and cauline leaves.

It is found in the cytoplasm. It localises to the cytosol. The enzyme catalyses beta-D-fructose 1,6-bisphosphate = D-glyceraldehyde 3-phosphate + dihydroxyacetone phosphate. It functions in the pathway carbohydrate degradation; glycolysis; D-glyceraldehyde 3-phosphate and glycerone phosphate from D-glucose: step 4/4. In terms of biological role, fructose-bisphosphate aldolase that plays a key role in glycolysis and gluconeogenesis. The protein is Fructose-bisphosphate aldolase 5, cytosolic of Arabidopsis thaliana (Mouse-ear cress).